The following is a 376-amino-acid chain: uncharacterized protein (376 aa).

At Ser-59 the chain carries Phosphoserine. Positions 139 to 367 (VAIEITVQRQ…CLIEHHNAIF (229 aa)) constitute a Rho-GAP domain. The segment at 307–338 (RPSRSPKKSNDFETATPWDLLSDEGEGPDASS) is disordered.

This is an uncharacterized protein from Arabidopsis thaliana (Mouse-ear cress).